The sequence spans 418 residues: Light-independent protochlorophyllide reductase subunit N (418 aa).

Residues Cys17, Cys42, and Cys103 each contribute to the [4Fe-4S] cluster site.

This sequence belongs to the BchN/ChlN family. As to quaternary structure, protochlorophyllide reductase is composed of three subunits; ChlL, ChlN and ChlB. Forms a heterotetramer of two ChlB and two ChlN subunits. [4Fe-4S] cluster serves as cofactor.

It catalyses the reaction chlorophyllide a + oxidized 2[4Fe-4S]-[ferredoxin] + 2 ADP + 2 phosphate = protochlorophyllide a + reduced 2[4Fe-4S]-[ferredoxin] + 2 ATP + 2 H2O. It participates in porphyrin-containing compound metabolism; chlorophyll biosynthesis (light-independent). Its function is as follows. Component of the dark-operative protochlorophyllide reductase (DPOR) that uses Mg-ATP and reduced ferredoxin to reduce ring D of protochlorophyllide (Pchlide) to form chlorophyllide a (Chlide). This reaction is light-independent. The NB-protein (ChlN-ChlB) is the catalytic component of the complex. This is Light-independent protochlorophyllide reductase subunit N from Prochlorococcus marinus (strain MIT 9313).